A 393-amino-acid polypeptide reads, in one-letter code: MSFSLSEWLWQETYWLPPNVTWAELEDRDGLVFAHPHHVLAAFPVALVLVAVRIVFERFVALPLSRWMGVQDPIRRKIKPNPVLEKYFLRMKQCPEETQMVLLASQCGLTLRQTQRWFRRRRNQDRPSLSKKFCEACWRFVFYLCSFVGGTSILYHESWLWSPSLCWENYPHQTLNLSLYWWYLLELGFYLSLLITLPFDVKRKDFKEQVVHHFVAVGLIGFSYSVNLLRIGAVVLLLHDCSDYLLEGCKILNYAHFRRGCDALFIMFALVFFYTRLIFFPTQVIYTSVYDSIKNSGPFFGYYFFIVLLVMLQILHVYWFCLILRMLYSFLHKGQMTEDIRSDVEEPDSSDDEPVSEGPQLKNGMARGSRVAVTNGPRSRAAACLTNGHTRAT.

The Lumenal portion of the chain corresponds to 1 to 31; sequence MSFSLSEWLWQETYWLPPNVTWAELEDRDGL. N-linked (GlcNAc...) asparagine glycosylation is present at asparagine 19. A helical membrane pass occupies residues 32–52; the sequence is VFAHPHHVLAAFPVALVLVAV. The tract at residues 67–128 is homeobox-like; it reads WMGVQDPIRR…RRRRNQDRPS (62 aa). Positions 131 to 332 constitute a TLC domain; it reads KKFCEACWRF…ILRMLYSFLH (202 aa). The next 4 helical transmembrane spans lie at 140–160, 179–199, 217–237, and 265–285; these read FVFY…ESWL, LYWW…TLPF, VGLI…VVLL, and FIMF…TQVI. The short motif at 291–301 is the Last loop motif element; it reads DSIKNSGPFFG. Residues 304–324 form a helical membrane-spanning segment; the sequence is FFIVLLVMLQILHVYWFCLIL. Over 325–393 the chain is Cytoplasmic; that stretch reads RMLYSFLHKG…CLTNGHTRAT (69 aa). The segment at 341 to 393 is disordered; the sequence is RSDVEEPDSSDDEPVSEGPQLKNGMARGSRVAVTNGPRSRAAACLTNGHTRAT. Phosphoserine is present on residues serine 342, serine 349, and serine 350. Residues 345–355 show a composition bias toward acidic residues; sequence EEPDSSDDEPV.

Post-translationally, phosphorylated at the C-terminus by CK2. Ubiquitously expressed, with highest levels in skin.

It localises to the endoplasmic reticulum membrane. It catalyses the reaction sphinganine + octadecanoyl-CoA = N-(octadecanoyl)-sphinganine + CoA + H(+). The catalysed reaction is eicosanoyl-CoA + sphinganine = N-eicosanoylsphinganine + CoA + H(+). It carries out the reaction docosanoyl-CoA + sphinganine = N-docosanoylsphinganine + CoA + H(+). The enzyme catalyses tetracosanoyl-CoA + sphinganine = N-tetracosanoylsphinganine + CoA + H(+). It catalyses the reaction hexacosanoyl-CoA + sphinganine = N-hexacosanoylsphinganine + CoA + H(+). The catalysed reaction is a fatty acyl-CoA + sphing-4-enine = an N-acylsphing-4-enine + CoA + H(+). It carries out the reaction sphing-4-enine + octadecanoyl-CoA = N-octadecanoylsphing-4-enine + CoA + H(+). The enzyme catalyses hexadecasphinganine + octadecanoyl-CoA = N-octadecanoylhexadecasphinganine + CoA + H(+). Its pathway is lipid metabolism; sphingolipid metabolism. In terms of biological role, ceramide synthase that catalyzes formation of ceramide from sphinganine and acyl-CoA substrates, with high selectivity toward long and very-long chains (C18:0-C22:0) as acyl donor. The sequence is that of Ceramide synthase 4 from Mus musculus (Mouse).